Consider the following 498-residue polypeptide: Probable cytosol aminopeptidase (498 aa).

Residues Lys-264 and Asp-269 each contribute to the Mn(2+) site. The active site involves Lys-276. Mn(2+)-binding residues include Asp-287, Asp-346, and Glu-348. The active site involves Arg-350.

The protein belongs to the peptidase M17 family. Mn(2+) is required as a cofactor.

The protein resides in the cytoplasm. It carries out the reaction Release of an N-terminal amino acid, Xaa-|-Yaa-, in which Xaa is preferably Leu, but may be other amino acids including Pro although not Arg or Lys, and Yaa may be Pro. Amino acid amides and methyl esters are also readily hydrolyzed, but rates on arylamides are exceedingly low.. The catalysed reaction is Release of an N-terminal amino acid, preferentially leucine, but not glutamic or aspartic acids.. In terms of biological role, presumably involved in the processing and regular turnover of intracellular proteins. Catalyzes the removal of unsubstituted N-terminal amino acids from various peptides. This is Probable cytosol aminopeptidase from Rhizobium rhizogenes (strain K84 / ATCC BAA-868) (Agrobacterium radiobacter).